The primary structure comprises 461 residues: V-type ATP synthase beta chain (461 aa).

It belongs to the ATPase alpha/beta chains family.

Functionally, produces ATP from ADP in the presence of a proton gradient across the membrane. The V-type beta chain is a regulatory subunit. In Streptococcus pneumoniae serotype 19F (strain G54), this protein is V-type ATP synthase beta chain.